The primary structure comprises 389 residues: MQTFAEELEALRAEGLYRSMRVIKGAQGSRVELDGKQVLMLCSNNYLGLADHPELRSAAVFGVAFGVGSGASRLVSGTMELHEKLEERIAAFKGTEKALVFNSGYAANTGIVSALVGRGDAIFSDRLNHASIIDGALLSRADLHRYPHRDMAALERLLQDKGGNGRRLIVTDGVFSMDGDIAPLQDLVRLAKKYGALLMVDDAHGTGVLGPTGRGSGELLGVMDGIDIHMGTLGKGLGSFGAYAAASATICDYLVNKARSFIFSTSLPPAVLAASIAAIELVDSPEGKELREKLAANVALFKEKLAQAGFDTMGSETQIVPIFVGPADATMEFSKVLLEQGIFVQGIRPPTVPSGSCRLRCTIMATHEPAELEEAAGIIEQVGKKLGVV.

A substrate-binding site is contributed by arginine 18. 104–105 (GY) provides a ligand contact to pyridoxal 5'-phosphate. Histidine 129 contributes to the substrate binding site. 3 residues coordinate pyridoxal 5'-phosphate: serine 176, histidine 204, and threonine 232. The residue at position 235 (lysine 235) is an N6-(pyridoxal phosphate)lysine. Threonine 351 is a binding site for substrate.

The protein belongs to the class-II pyridoxal-phosphate-dependent aminotransferase family. BioF subfamily. Homodimer. The cofactor is pyridoxal 5'-phosphate.

It carries out the reaction 6-carboxyhexanoyl-[ACP] + L-alanine + H(+) = (8S)-8-amino-7-oxononanoate + holo-[ACP] + CO2. It functions in the pathway cofactor biosynthesis; biotin biosynthesis. In terms of biological role, catalyzes the decarboxylative condensation of pimeloyl-[acyl-carrier protein] and L-alanine to produce 8-amino-7-oxononanoate (AON), [acyl-carrier protein], and carbon dioxide. The polypeptide is 8-amino-7-oxononanoate synthase (Citrifermentans bemidjiense (strain ATCC BAA-1014 / DSM 16622 / JCM 12645 / Bem) (Geobacter bemidjiensis)).